Reading from the N-terminus, the 601-residue chain is Sodium-dependent phosphate transport protein 2C (601 aa).

At 1-75 (MPNSLAGDQV…HQVVSGFLKA (75 aa)) the chain is on the cytoplasmic side. S4 carries the phosphoserine modification. The chain crosses the membrane as a helical span at residues 76–96 (CGLLGSLYFFICSLDILSSAF). At 97–110 (QLLGSKMAGDIFKD) the chain is on the extracellular side. A helical membrane pass occupies residues 111 to 131 (NVVLSNPVAGLVIGVVVTVLV). Topologically, residues 132-187 (QSSSTSSSIVVSMVASKSLTVQASVPIIMGVNVGTSITSTLVSMAQSGDRDEFQRA) are cytoplasmic. The helical transmembrane segment at 188 to 208 (FGGSAVHGIFNWLTVLVLLPL) threads the bilayer. The Extracellular segment spans residues 209–324 (ENATAALERL…FAGSELTDLA (116 aa)). N210, N264, N267, and N299 each carry an N-linked (GlcNAc...) asparagine glycan. Cysteines 275 and 311 form a disulfide. The helical transmembrane segment at 325–345 (VGFILLAGSLLVLCVCLVLIV) threads the bilayer. Residues 346 to 369 (KLLNSVLRGRIAQAVKTVINADFP) are Cytoplasmic-facing. The helical transmembrane segment at 370-390 (FPFGWLSGYLAILVGAGLTFL) threads the bilayer. Over 391 to 447 (LQSSSVFTAAIVPLMGVGVINLERAYPLFLGSNIGTTTTALLAALASPADTLLFAVQ) the chain is Extracellular. A helical transmembrane segment spans residues 448-468 (VALIHFFFNLAGILLWYLVPV). Topologically, residues 469–487 (LRLPIPLAKRFGDLTAQYR) are cytoplasmic. A helical transmembrane segment spans residues 488–508 (WVAIVYLLLTFLLLPLAAFGL). Residues 509 to 512 (SLAG) are Extracellular-facing. A helical transmembrane segment spans residues 513–533 (GSVLAAVGGPLVGLVLLIILV). The Cytoplasmic segment spans residues 534–601 (NVLQRHRPSW…NPQVIASQQL (68 aa)).

Belongs to the SLC34A transporter family. Highly expressed in the kidney. Not found in any of the other tested tissues.

It is found in the apical cell membrane. The enzyme catalyses 2 Na(+)(out) + phosphate(out) = 2 Na(+)(in) + phosphate(in). Its function is as follows. Involved in actively transporting phosphate into cells via Na(+) cotransport in the renal brush border membrane. The cotransport has a Na(+):Pi stoichiometry of 2:1 and is electroneutral. This chain is Sodium-dependent phosphate transport protein 2C (Slc34a3), found in Rattus norvegicus (Rat).